The following is a 526-amino-acid chain: Glutamyl-tRNA(Gln) amidotransferase subunit A, mitochondrial (526 aa).

Catalysis depends on charge relay system residues Lys76 and Ser171. The Acyl-ester intermediate role is filled by Ser195.

Belongs to the amidase family. GatA subfamily. As to quaternary structure, subunit of the heterotrimeric GatCAB amidotransferase (AdT) complex, composed of A (QRSL1), B (GATB) and C (GATC) subunits.

The protein resides in the mitochondrion. The enzyme catalyses L-glutamyl-tRNA(Gln) + L-glutamine + ATP + H2O = L-glutaminyl-tRNA(Gln) + L-glutamate + ADP + phosphate + H(+). Its function is as follows. Allows the formation of correctly charged Gln-tRNA(Gln) through the transamidation of misacylated Glu-tRNA(Gln) in the mitochondria. The reaction takes place in the presence of glutamine and ATP through an activated gamma-phospho-Glu-tRNA(Gln). In Canis lupus familiaris (Dog), this protein is Glutamyl-tRNA(Gln) amidotransferase subunit A, mitochondrial.